The sequence spans 213 residues: CDP-diacylglycerol--inositol 3-phosphatidyltransferase (213 aa).

At M1–N5 the chain is on the cytoplasmic side. The helical transmembrane segment at I6–F26 threads the bilayer. A topological domain (lumenal) is located at residue Y27. The chain crosses the membrane as a helical span at residues F28 to A48. Mg(2+)-binding residues include D47 and D50. Residues F49–R73 lie on the Cytoplasmic side of the membrane. 3 residues coordinate a CDP-1,2-diacyl-sn-glycerol: G51, R55, and T61. Mg(2+) contacts are provided by D68 and D72. D72 serves as the catalytic Proton acceptor. A helical transmembrane segment spans residues C74–F94. Residue Q95 is a topological domain, lumenal. The chain crosses the membrane as a helical span at residues L96–G116. Topologically, residues S117–P139 are cytoplasmic. Residues A140 to F160 traverse the membrane as a helical segment. The Lumenal portion of the chain corresponds to S161–M174. The chain crosses the membrane as a helical span at residues G175–I195. Residues T196 to K213 lie on the Cytoplasmic side of the membrane.

The protein belongs to the CDP-alcohol phosphatidyltransferase class-I family. Mn(2+) serves as cofactor. Mg(2+) is required as a cofactor.

The protein resides in the endoplasmic reticulum membrane. Its subcellular location is the cell membrane. The catalysed reaction is a CDP-1,2-diacyl-sn-glycerol + myo-inositol = a 1,2-diacyl-sn-glycero-3-phospho-(1D-myo-inositol) + CMP + H(+). Catalyzes the biosynthesis of phosphatidylinositol (PtdIns) as well as PtdIns:inositol exchange reaction. May thus act to reduce an excessive cellular PtdIns content. The exchange activity is due to the reverse reaction of PtdIns synthase and is dependent on CMP, which is tightly bound to the enzyme. This chain is CDP-diacylglycerol--inositol 3-phosphatidyltransferase, found in Mus musculus (Mouse).